We begin with the raw amino-acid sequence, 508 residues long: Glycerol kinase (508 aa).

Thr-14 lines the ADP pocket. ATP is bound by residues Thr-14, Thr-15, and Ser-16. Thr-14 is a binding site for sn-glycerol 3-phosphate. Arg-18 serves as a coordination point for ADP. Sn-glycerol 3-phosphate-binding residues include Arg-84, Glu-85, and Tyr-136. Arg-84, Glu-85, and Tyr-136 together coordinate glycerol. His-232 is modified (phosphohistidine; by HPr). Asp-246 serves as a coordination point for sn-glycerol 3-phosphate. Glycerol contacts are provided by Asp-246 and Gln-247. ADP is bound by residues Thr-268 and Gly-311. ATP-binding residues include Thr-268, Gly-311, Gln-315, and Gly-412. ADP-binding residues include Gly-412 and Asn-416.

This sequence belongs to the FGGY kinase family. As to quaternary structure, homotetramer and homodimer (in equilibrium). The phosphoenolpyruvate-dependent sugar phosphotransferase system (PTS), including enzyme I, and histidine-containing protein (HPr) are required for the phosphorylation, which leads to the activation of the enzyme.

It catalyses the reaction glycerol + ATP = sn-glycerol 3-phosphate + ADP + H(+). The protein operates within polyol metabolism; glycerol degradation via glycerol kinase pathway; sn-glycerol 3-phosphate from glycerol: step 1/1. Its activity is regulated as follows. Activated by phosphorylation and inhibited by fructose 1,6-bisphosphate (FBP). Functionally, key enzyme in the regulation of glycerol uptake and metabolism. Catalyzes the phosphorylation of glycerol to yield sn-glycerol 3-phosphate. This chain is Glycerol kinase, found in Streptococcus pyogenes serotype M4 (strain MGAS10750).